Consider the following 706-residue polypeptide: 1,4-alpha-glucan-branching enzyme (706 aa).

(1,4-alpha-D-glucosyl)n is bound by residues Trp96 and Lys133. The active-site Nucleophile is the Asp358. Residue Glu419 is the Proton donor of the active site.

The protein belongs to the glycosyl hydrolase 13 family. GlgB subfamily. Monomer.

It is found in the cytoplasm. The enzyme catalyses Transfers a segment of a (1-&gt;4)-alpha-D-glucan chain to a primary hydroxy group in a similar glucan chain.. Its pathway is glycan biosynthesis; glycogen biosynthesis. Glycogen-branching enzyme participates in the glycogen biosynthetic process along with glycogenin and glycogen synthase. Generates alpha-1,6-glucosidic branches from alpha-1,4-linked glucose chains, to increase solubility of the glycogen polymer. This Candida glabrata (strain ATCC 2001 / BCRC 20586 / JCM 3761 / NBRC 0622 / NRRL Y-65 / CBS 138) (Yeast) protein is 1,4-alpha-glucan-branching enzyme (GLC3).